We begin with the raw amino-acid sequence, 492 residues long: Zn(2)-C6 fungal-type transcription factor (492 aa).

The zn(2)-C6 fungal-type DNA-binding region spans 14-41 (CRRCKNRKIKCDEVHPRCGNCAKHGVPC). A disordered region spans residues 58–119 (TSTESVGAPT…QPSISSSTNT (62 aa)). Residues 78–95 (SAPRTPLTRPRAPSSPAR) show a composition bias toward low complexity. The residue at position 82 (Thr-82) is a Phosphothreonine. Residues Ser-92 and Ser-102 each carry the phosphoserine modification. Over residues 107–119 (VYSQPSISSSTNT) the composition is skewed to polar residues. Position 217 is a phosphothreonine (Thr-217). Ser-305 is subject to Phosphoserine.

As to quaternary structure, interacts with HOG1. In terms of processing, phosphorylation at Thr-82, Ser-92, Ser-102, thr-117 and ser-305 by HOG1 is required for regulating expression of ergosterol biosynthesis genes.

Its subcellular location is the nucleus. In terms of biological role, transcription factor that targets gene promoters containing 2 conserved CGAA repeat sequences. Positively regulates the expression of ergosterol biosynthesis genes including CYP51A and CYP51B encoding the sterol 14-alpha demethylase, and ERG6A and ERG6B encoding the sterol 24-C-methyltransferase. This chain is Zn(2)-C6 fungal-type transcription factor, found in Gibberella zeae (strain ATCC MYA-4620 / CBS 123657 / FGSC 9075 / NRRL 31084 / PH-1) (Wheat head blight fungus).